We begin with the raw amino-acid sequence, 169 residues long: Capsid protein (169 aa).

The protein belongs to the nanoviridae capsid protein family.

The protein resides in the virion. The protein is Capsid protein (DNA-S) of Subterranean clover stunt virus (strain F) (SCSV).